Here is a 186-residue protein sequence, read N- to C-terminus: Mating-type-like protein ALPHA2 (186 aa).

The homeobox; TALE-type DNA-binding region spans 112 to 174; it reads KKIKSRRLTK…NRRRKEKNTK (63 aa).

It belongs to the TALE/M-ATYP homeobox family. In terms of assembly, forms a heterodimer with A1.

It is found in the nucleus. Mating type proteins are sequence specific DNA-binding proteins that act as master switches in yeast differentiation by controlling gene expression in a cell type-specific fashion. Transcriptional corepressor that acts in conjunction with A1 to repress transcription both of homozygote-specific genes and of genes necessary for the white-opaque switch, a prerequisite for mating. The protein is Mating-type-like protein ALPHA2 (MTLALPHA2) of Candida albicans (strain SC5314 / ATCC MYA-2876) (Yeast).